Here is a 576-residue protein sequence, read N- to C-terminus: Deformed epidermal autoregulatory factor 1 (576 aa).

Disordered stretches follow at residues 52–76 (VTSS…GGGN), 189–215 (AGGA…NPST), and 309–362 (ESAS…SGSG). Gly residues-rich tracts occupy residues 61–76 (GSGG…GGGN) and 191–207 (GASG…GGSS). The SAND domain maps to 210-291 (SENPSTQHNE…QSLIDEGTLT (82 aa)). Positions 324 to 340 (RKRNQTDLDMESGPKRK) match the Nuclear localization signal motif. A compositionally biased stretch (low complexity) spans 345–362 (HSNNNNSNTNNNNTSGSG). Cysteine 521, cysteine 524, cysteine 532, cysteine 535, cysteine 541, cysteine 545, histidine 553, and cysteine 557 together coordinate Zn(2+). The MYND-type zinc finger occupies 521–557 (CANCNREALAECSLCRKTPYCSEFCQRKDWNAHQVEC).

Its subcellular location is the nucleus. In terms of biological role, transcription factor that binds the homeotic Deformed (Dfd) response element. High affinity binding sites contain at least 1 TTCG motif surrounded by additional TCG sequences. May be involved in the selective action of Dfd on these sites without binding directly to the Dfd protein. Requirement of DEAF1 activity may be a common feature of enhancers targeted by Dfd. The chain is Deformed epidermal autoregulatory factor 1 (Deaf1) from Drosophila melanogaster (Fruit fly).